Reading from the N-terminus, the 847-residue chain is Glucans biosynthesis glucosyltransferase H (847 aa).

Residues 1 to 138 lie on the Cytoplasmic side of the membrane; that stretch reads MNKTTEYIDA…KWRTVGTIRR (138 aa). Residues 139–156 form a helical membrane-spanning segment; the sequence is YILLILTLAQTVVATWYM. Topologically, residues 157–193 are periplasmic; the sequence is KTILPYQGWALINPMDMVGQDIWVSFMQLLPYMLQTG. Residues 194-216 traverse the membrane as a helical segment; sequence ILILFAVLFCWVSAGFWTALMGF. At 217–511 the chain is on the cytoplasmic side; that stretch reads LQLLIGRDKY…LVKGMHPVHR (295 aa). Residues 512–534 form a helical membrane-spanning segment; sequence AVFLTGVMSYLSAPLWFMFLALS. Residues 535-567 are Periplasmic-facing; the sequence is TALQVVHALTEPQYFLQPRQLFPVWPQWRPELA. The chain crosses the membrane as a helical span at residues 568-590; it reads IALFASTMVLLFLPKLLSIMLIW. Residues 591–602 lie on the Cytoplasmic side of the membrane; it reads CKGTKEYGGFWR. A helical transmembrane segment spans residues 603 to 625; it reads VTLSLLLEVLFSVLLAPVRMLFH. At 626-679 the chain is on the periplasmic side; sequence TVFVVSAFLGWEVVWNSPQRDDDSTPWGEAFMRHGSQLLLGLVWAVGMAWLDLR. The helical transmembrane segment at 680–702 threads the bilayer; that stretch reads FLFWLAPIVFSLILSPFVSVISS. The Cytoplasmic portion of the chain corresponds to 703–847; sequence RSTVGLRTKR…ALQGRTSSAG (145 aa).

Belongs to the glycosyltransferase 2 family. OpgH subfamily.

It is found in the cell inner membrane. It participates in glycan metabolism; osmoregulated periplasmic glucan (OPG) biosynthesis. In terms of biological role, involved in the biosynthesis of osmoregulated periplasmic glucans (OPGs). The chain is Glucans biosynthesis glucosyltransferase H from Salmonella typhi.